The following is a 584-amino-acid chain: 2-succinyl-5-enolpyruvyl-6-hydroxy-3-cyclohexene-1-carboxylate synthase (584 aa).

It belongs to the TPP enzyme family. MenD subfamily. As to quaternary structure, homodimer. Mg(2+) is required as a cofactor. It depends on Mn(2+) as a cofactor. Requires thiamine diphosphate as cofactor.

The enzyme catalyses isochorismate + 2-oxoglutarate + H(+) = 5-enolpyruvoyl-6-hydroxy-2-succinyl-cyclohex-3-ene-1-carboxylate + CO2. Its pathway is quinol/quinone metabolism; 1,4-dihydroxy-2-naphthoate biosynthesis; 1,4-dihydroxy-2-naphthoate from chorismate: step 2/7. The protein operates within quinol/quinone metabolism; menaquinone biosynthesis. Functionally, catalyzes the thiamine diphosphate-dependent decarboxylation of 2-oxoglutarate and the subsequent addition of the resulting succinic semialdehyde-thiamine pyrophosphate anion to isochorismate to yield 2-succinyl-5-enolpyruvyl-6-hydroxy-3-cyclohexene-1-carboxylate (SEPHCHC). In Bacillus cytotoxicus (strain DSM 22905 / CIP 110041 / 391-98 / NVH 391-98), this protein is 2-succinyl-5-enolpyruvyl-6-hydroxy-3-cyclohexene-1-carboxylate synthase.